The sequence spans 181 residues: UPF0302 protein ABC1905 (181 aa).

It belongs to the UPF0302 family.

In Shouchella clausii (strain KSM-K16) (Alkalihalobacillus clausii), this protein is UPF0302 protein ABC1905.